The following is a 297-amino-acid chain: Protease HtpX homolog (297 aa).

The next 2 helical transmembrane spans lie at 14-34 (IFLILAFFFLLTAIGAAAGYL) and 39-59 (YQFGIVLALILGSIYAFSMIF). Residue H143 participates in Zn(2+) binding. Residue E144 is part of the active site. Position 147 (H147) interacts with Zn(2+). The next 2 helical transmembrane spans lie at 153-173 (IRISTIAVALASAITLIASMG) and 196-216 (IVFLIFSLLSLILAPLIASMV). Residue E225 participates in Zn(2+) binding.

It belongs to the peptidase M48B family. Requires Zn(2+) as cofactor.

The protein resides in the cell membrane. The chain is Protease HtpX homolog from Streptococcus uberis (strain ATCC BAA-854 / 0140J).